The sequence spans 327 residues: uncharacterized protein (327 aa).

The helical transmembrane segment at 13–33 (IICIISIIVLLLIIISLYPHK) threads the bilayer.

It localises to the membrane. This is an uncharacterized protein from Caenorhabditis elegans.